The following is a 108-amino-acid chain: UPF0145 protein AF_0869 (108 aa).

Belongs to the UPF0145 family.

The protein is UPF0145 protein AF_0869 of Archaeoglobus fulgidus (strain ATCC 49558 / DSM 4304 / JCM 9628 / NBRC 100126 / VC-16).